The chain runs to 346 residues: Small ribosomal subunit biogenesis GTPase RsgA 1 (346 aa).

A CP-type G domain is found at 93 to 248 (EEQLIAANFD…IIDTPGMREF (156 aa)). GTP contacts are provided by residues 138–141 (TKAD) and 190–198 (GSSGVGKSS). Residues Cys-271, Cys-276, His-278, and Cys-284 each contribute to the Zn(2+) site.

Belongs to the TRAFAC class YlqF/YawG GTPase family. RsgA subfamily. In terms of assembly, monomer. Associates with 30S ribosomal subunit, binds 16S rRNA. It depends on Zn(2+) as a cofactor.

The protein localises to the cytoplasm. One of several proteins that assist in the late maturation steps of the functional core of the 30S ribosomal subunit. Helps release RbfA from mature subunits. May play a role in the assembly of ribosomal proteins into the subunit. Circularly permuted GTPase that catalyzes slow GTP hydrolysis, GTPase activity is stimulated by the 30S ribosomal subunit. This chain is Small ribosomal subunit biogenesis GTPase RsgA 1, found in Listeria innocua serovar 6a (strain ATCC BAA-680 / CLIP 11262).